The following is a 420-amino-acid chain: Meiotically up-regulated gene 137 protein (420 aa).

Positions 10–232 (NEKPLGDQRA…QNSLTPQKKI (223 aa)) constitute a BAR domain. Residues 279 to 345 (KETVFVKAIY…PVNYCTRIYD (67 aa)) form the SH3 domain. Residues 398 to 420 (SQNVEASSQPIKIRKPLPEIPNK) form a disordered region.

Its subcellular location is the cytoplasm. The protein resides in the nucleus. Its function is as follows. Has a role in meiosis and sporulation. The chain is Meiotically up-regulated gene 137 protein (mug137) from Schizosaccharomyces pombe (strain 972 / ATCC 24843) (Fission yeast).